A 511-amino-acid polypeptide reads, in one-letter code: Ribonuclease Y (511 aa).

A helical membrane pass occupies residues 2–22; that stretch reads ITTVIIAIVCFAVGGGLSYML. Residues 201 to 261 enclose the KH domain; the sequence is SVTVFHIESD…VRREIARLAL (61 aa). The HD domain maps to 327-420; that stretch reads LLQHARETAN…VQVCDAISGA (94 aa).

The protein belongs to the RNase Y family.

Its subcellular location is the cell membrane. Its function is as follows. Endoribonuclease that initiates mRNA decay. The polypeptide is Ribonuclease Y (Phocaeicola vulgatus (strain ATCC 8482 / DSM 1447 / JCM 5826 / CCUG 4940 / NBRC 14291 / NCTC 11154) (Bacteroides vulgatus)).